The chain runs to 144 residues: MRLNTLSPAAGSKSAPKRVGRGIGSGLGKTAGRGHKGQKSRSGGGVRVGFEGGQMPLKIRLPKFGFTSRRALVTAEVRLLELAKVNGDVIDLNTLKDANVLTRNIQFAKIVLSGTIERPVTVKGLKVTKGARAAIEAAGGKIEE.

Residues 1-49 are disordered; sequence MRLNTLSPAAGSKSAPKRVGRGIGSGLGKTAGRGHKGQKSRSGGGVRVG. Gly residues predominate over residues 21–31; the sequence is RGIGSGLGKTA.

Belongs to the universal ribosomal protein uL15 family. As to quaternary structure, part of the 50S ribosomal subunit.

Functionally, binds to the 23S rRNA. The protein is Large ribosomal subunit protein uL15 of Shewanella denitrificans (strain OS217 / ATCC BAA-1090 / DSM 15013).